A 245-amino-acid polypeptide reads, in one-letter code: 1-(5-phosphoribosyl)-5-[(5-phosphoribosylamino)methylideneamino] imidazole-4-carboxamide isomerase (245 aa).

Asp8 functions as the Proton acceptor in the catalytic mechanism. Asp129 functions as the Proton donor in the catalytic mechanism.

The protein belongs to the HisA/HisF family.

It is found in the cytoplasm. The catalysed reaction is 1-(5-phospho-beta-D-ribosyl)-5-[(5-phospho-beta-D-ribosylamino)methylideneamino]imidazole-4-carboxamide = 5-[(5-phospho-1-deoxy-D-ribulos-1-ylimino)methylamino]-1-(5-phospho-beta-D-ribosyl)imidazole-4-carboxamide. It participates in amino-acid biosynthesis; L-histidine biosynthesis; L-histidine from 5-phospho-alpha-D-ribose 1-diphosphate: step 4/9. The polypeptide is 1-(5-phosphoribosyl)-5-[(5-phosphoribosylamino)methylideneamino] imidazole-4-carboxamide isomerase (Rhodopseudomonas palustris (strain BisB5)).